A 2319-amino-acid polypeptide reads, in one-letter code: Neurogenic locus notch homolog protein 3 (2319 aa).

Residues 1-14 (MGPGARGRRRRRRL) are compositionally biased toward basic residues. Residues 1 to 20 (MGPGARGRRRRRRLMALPPP) form a disordered region. The signal sequence occupies residues 1–40 (MGPGARGRRRRRRLMALPPPPPPMRALPLLLLLLAGLGAA). EGF-like domains follow at residues 41 to 79 (APPC…ERCQ), 80 to 120 (LEDP…PDCS), and 121 to 158 (LPDP…RNCR). At 41 to 1645 (APPCLDGSPC…LEPPEQSVPL (1605 aa)) the chain is on the extracellular side. 99 cysteine pairs are disulfide-bonded: Cys-44–Cys-56, Cys-50–Cys-67, Cys-69–Cys-78, Cys-84–Cys-95, Cys-89–Cys-108, Cys-110–Cys-119, Cys-125–Cys-136, Cys-130–Cys-146, Cys-148–Cys-157, Cys-164–Cys-176, Cys-170–Cys-185, Cys-187–Cys-196, Cys-203–Cys-214, Cys-208–Cys-224, Cys-226–Cys-235, Cys-242–Cys-253, Cys-247–Cys-262, Cys-264–Cys-273, Cys-280–Cys-293, Cys-287–Cys-302, Cys-304–Cys-313, Cys-320–Cys-331, Cys-325–Cys-340, Cys-342–Cys-351, Cys-357–Cys-368, Cys-362–Cys-379, Cys-381–Cys-390, Cys-397–Cys-410, Cys-404–Cys-419, Cys-421–Cys-430, Cys-437–Cys-448, Cys-442–Cys-457, Cys-459–Cys-468, Cys-475–Cys-486, Cys-480–Cys-495, Cys-497–Cys-506, Cys-513–Cys-524, Cys-518–Cys-533, Cys-535–Cys-544, Cys-551–Cys-561, Cys-556–Cys-570, Cys-572–Cys-581, Cys-588–Cys-599, Cys-593–Cys-608, Cys-610–Cys-619, Cys-626–Cys-636, Cys-631–Cys-645, Cys-647–Cys-656, Cys-663–Cys-674, Cys-668–Cys-683, Cys-685–Cys-694, Cys-701–Cys-711, Cys-706–Cys-720, Cys-722–Cys-731, Cys-740–Cys-751, Cys-745–Cys-760, Cys-762–Cys-771, Cys-777–Cys-788, Cys-782–Cys-798, Cys-800–Cys-809, Cys-816–Cys-828, Cys-822–Cys-837, Cys-839–Cys-848, Cys-855–Cys-866, Cys-860–Cys-875, Cys-877–Cys-886, Cys-893–Cys-903, Cys-898–Cys-912, Cys-914–Cys-923, Cys-930–Cys-941, Cys-935–Cys-950, Cys-952–Cys-961, Cys-968–Cys-979, Cys-973–Cys-988, Cys-990–Cys-999, Cys-1006–Cys-1017, Cys-1011–Cys-1024, Cys-1026–Cys-1035, Cys-1042–Cys-1063, Cys-1057–Cys-1072, Cys-1074–Cys-1083, Cys-1090–Cys-1101, Cys-1095–Cys-1110, Cys-1112–Cys-1121, Cys-1128–Cys-1139, Cys-1133–Cys-1148, Cys-1150–Cys-1159, Cys-1166–Cys-1184, Cys-1178–Cys-1193, Cys-1195–Cys-1204, Cys-1211–Cys-1224, Cys-1216–Cys-1234, Cys-1236–Cys-1245, Cys-1252–Cys-1263, Cys-1257–Cys-1277, Cys-1279–Cys-1288, Cys-1295–Cys-1306, Cys-1300–Cys-1315, and Cys-1317–Cys-1326. The region spanning 160–197 (DIDECRAGASCRHGGTCINTPGSFHCLCPLGYTGLLCE) is the EGF-like 4; calcium-binding domain. Residues 199–236 (PIVPCAPSPCRNGGTCRQSSDVTYDCACLPGFEGQNCE) enclose the EGF-like 5 domain. One can recognise an EGF-like 6; calcium-binding domain in the interval 238-274 (NVDDCPGHRCLNGGTCVDGVNTYNCQCPPEWTGQFCT). Positions 276 to 314 (DVDECQLQPNACHNGGTCFNLLGGHSCVCVNGWTGESCS) constitute an EGF-like 7 domain. Residues 316–352 (NIDDCATAVCFHGATCHDRVASFYCACPMGKTGLLCH) enclose the EGF-like 8; calcium-binding domain. The 39-residue stretch at 353–391 (LDDACVSNPCHEDAICDTNPVSGRAICTCPPGFTGGACD) folds into the EGF-like 9 domain. One can recognise an EGF-like 10; calcium-binding domain in the interval 393–431 (DVDECSIGANPCEHLGRCVNTQGSFLCQCGRGYTGPRCE). In terms of domain architecture, EGF-like 11; calcium-binding spans 433–469 (DVNECLSGPCRNQATCLDRIGQFTCICMAGFTGTFCE). An EGF-like 12; calcium-binding domain is found at 471 to 507 (DIDECQSSPCVNGGVCKDRVNGFSCTCPSGFSGSTCQ). The EGF-like 13; calcium-binding domain occupies 509-545 (DVDECASTPCRNGAKCVDQPDGYECRCAEGFEGTLCE). Residues 547–582 (NVDDCSPDPCHHGRCVDGIASFSCACAPGYTGIRCE) form the EGF-like 14; calcium-binding domain. In terms of domain architecture, EGF-like 15; calcium-binding spans 584-620 (QVDECRSQPCRYGGKCLDLVDKYLCRCPPGTTGVNCE). The region spanning 622–657 (NIDDCASNPCTFGVCRDGINRYDCVCQPGFTGPLCN) is the EGF-like 16; calcium-binding domain. The EGF-like 17; calcium-binding domain maps to 659-695 (EINECASSPCGEGGSCVDGENGFHCLCPPGSLPPLCL). EGF-like domains lie at 697 to 732 (ANHP…PRCS), 736 to 772 (APDA…HQCE), and 773 to 810 (VLSP…PRCQ). Residues 812-849 (DVDECAGASPCGPHGTCTNLPGSFRCICHGGYTGPFCD) enclose the EGF-like 21; calcium-binding domain. In terms of domain architecture, EGF-like 22; calcium-binding spans 851 to 887 (DIDDCDPNPCLNGGSCQDGVGSFSCSCLSGFAGPRCA). The EGF-like 23; calcium-binding domain occupies 889 to 924 (DVDECLSSPCGPGTCTDHVASFTCTCPPGYGGFHCE). 5 consecutive EGF-like domains span residues 926 to 962 (DLLD…THCQ), 964 to 1000 (KVDP…NQCQ), 1002 to 1036 (PVDW…PLCD), 1038 to 1084 (PSLP…SHCE), and 1086 to 1122 (EVDP…DSCE). The 37-residue stretch at 1124–1160 (DVDECASQPCQNGGSCIDLVAHYLCSCPPGTLGVLCE) folds into the EGF-like 29; calcium-binding domain. The EGF-like 30; calcium-binding domain occupies 1162–1205 (NEDDCGPGPSLDSGLRCLHNGTCVDLVGGFRCNCPPGYTGLHCE). Asn-1181 carries an N-linked (GlcNAc...) asparagine glycan. EGF-like domains lie at 1207 to 1246 (DINE…PRCQ), 1248 to 1289 (ALFP…LRCE), 1291 to 1327 (VARS…PSCR), and 1337 to 1375 (TNTS…PRCE). Asn-1338 is a glycosylation site (N-linked (GlcNAc...) asparagine). Intrachain disulfides connect Cys-1341–Cys-1352, Cys-1346–Cys-1363, Cys-1365–Cys-1374, Cys-1389–Cys-1412, Cys-1394–Cys-1407, Cys-1403–Cys-1419, Cys-1430–Cys-1453, Cys-1435–Cys-1448, Cys-1444–Cys-1460, Cys-1469–Cys-1495, Cys-1477–Cys-1490, and Cys-1486–Cys-1502. LNR repeat units lie at residues 1389–1429 (CPRA…PWRQ), 1430–1467 (CEAL…GRDR), and 1469–1507 (CNPV…SEVP). A glycan (N-linked (GlcNAc...) asparagine) is linked at Asn-1440. A helical membrane pass occupies residues 1646–1666 (LPLLVAGAVFLLVIFVLGVMV). The Cytoplasmic segment spans residues 1667-2319 (ARRKREHSTL…EVTPKRQVMA (653 aa)). ANK repeat units lie at residues 1840–1869 (TGET…DTNA), 1873–1903 (SGRT…DLDA), 1907–1936 (DGST…DVNA), 1940–1969 (LGKS…NKDM), and 1973–2002 (KEET…NREI). Disordered stretches follow at residues 2026–2046 (LDQP…PLLC) and 2059–2129 (QSGT…EGPY). The segment covering 2029–2046 (PSGPRSPSGPHGLGPLLC) has biased composition (low complexity). The residue at position 2175 (Arg-2175) is an Omega-N-methylarginine. A disordered region spans residues 2197–2319 (LNPATPVSPH…EVTPKRQVMA (123 aa)). Positions 2263-2288 (SLSDWSDSTPSPATATSATAAGALPA) are enriched in low complexity. A compositionally biased stretch (polar residues) spans 2297 to 2306 (SLPQSQTQLG).

Belongs to the NOTCH family. As to quaternary structure, heterodimer of a C-terminal fragment N(TM) and a N-terminal fragment N(EC) which are probably linked by disulfide bonds. Interacts with MAML1, MAML2 and MAML3 which act as transcriptional coactivators for NOTCH3. Interacts with PSMA1. Interacts with HIF1AN. Post-translationally, synthesized in the endoplasmic reticulum as an inactive form which is proteolytically cleaved by a furin-like convertase in the trans-Golgi network before it reaches the plasma membrane to yield an active, ligand-accessible form. Cleavage results in a C-terminal fragment N(TM) and a N-terminal fragment N(EC). Following ligand binding, it is cleaved by TNF-alpha converting enzyme (TACE) to yield a membrane-associated intermediate fragment called notch extracellular truncation (NEXT). This fragment is then cleaved by presenilin dependent gamma-secretase to release a notch-derived peptide containing the intracellular domain (NICD) from the membrane. In terms of processing, phosphorylated. Hydroxylated by HIF1AN. As to expression, expressed in postnatal central nervous system (CNS) germinal zones and, in early postnatal life, within numerous cells throughout the CNS. It is more highly localized to ventricular germinal zones.

Its subcellular location is the cell membrane. It is found in the nucleus. Functionally, functions as a receptor for membrane-bound ligands Jagged1, Jagged2 and Delta1 to regulate cell-fate determination. Upon ligand activation through the released notch intracellular domain (NICD) it forms a transcriptional activator complex with RBPJ/RBPSUH and activates genes of the enhancer of split locus. Affects the implementation of differentiation, proliferation and apoptotic programs. Acts instructively to control the cell fate determination of CNS multipotent progenitor cells, resulting in astroglial induction and neuron/oligodendrocyte suppression. The sequence is that of Neurogenic locus notch homolog protein 3 (Notch3) from Rattus norvegicus (Rat).